A 349-amino-acid polypeptide reads, in one-letter code: Heat-inducible transcription repressor HrcA (349 aa).

Belongs to the HrcA family.

Functionally, negative regulator of class I heat shock genes (grpE-dnaK-dnaJ and groELS operons). Prevents heat-shock induction of these operons. This chain is Heat-inducible transcription repressor HrcA, found in Lactobacillus acidophilus (strain ATCC 700396 / NCK56 / N2 / NCFM).